Consider the following 558-residue polypeptide: uncharacterized protein (558 aa).

The interval 396-420 (SSITDNDTDNDSGATESQQTDSEND) is disordered. A compositionally biased stretch (polar residues) spans 407–416 (SGATESQQTD).

It belongs to the chlamydial CPn_0065/CT_288/TC_0561 family.

This is an uncharacterized protein from Chlamydia muridarum (strain MoPn / Nigg).